Consider the following 398-residue polypeptide: Acetate kinase (398 aa).

Asn-8 is a binding site for Mg(2+). Lys-15 is a binding site for ATP. Arg-89 is a substrate binding site. Asp-146 functions as the Proton donor/acceptor in the catalytic mechanism. Residues 206-210 (HIGNG), 283-285 (DMR), and 331-335 (GMGEN) each bind ATP. Residue Glu-383 coordinates Mg(2+).

It belongs to the acetokinase family. Homodimer. Requires Mg(2+) as cofactor. Mn(2+) serves as cofactor.

The protein resides in the cytoplasm. It catalyses the reaction acetate + ATP = acetyl phosphate + ADP. It functions in the pathway metabolic intermediate biosynthesis; acetyl-CoA biosynthesis; acetyl-CoA from acetate: step 1/2. Functionally, catalyzes the formation of acetyl phosphate from acetate and ATP. Can also catalyze the reverse reaction. This chain is Acetate kinase, found in Streptococcus pyogenes serotype M6 (strain ATCC BAA-946 / MGAS10394).